The primary structure comprises 459 residues: uncharacterized protein (459 aa).

Residues 5–63 enclose the TRAM domain; that stretch reads PVEEGQKFPLTIRRMGINGEGIGYFKKAVVFVPGAITGEEVVVEAVKVRDRFTEAKLNK. [4Fe-4S] cluster-binding residues include Cys76, Cys82, Cys85, and Cys166. Positions 290, 319, 340, and 388 each coordinate S-adenosyl-L-methionine. The active-site Nucleophile is Cys415.

Belongs to the class I-like SAM-binding methyltransferase superfamily. RNA M5U methyltransferase family.

This is an uncharacterized protein from Listeria monocytogenes serotype 4b (strain F2365).